A 252-amino-acid chain; its full sequence is tRNA (guanine-N(7)-)-methyltransferase (252 aa).

4 residues coordinate S-adenosyl-L-methionine: glutamate 75, glutamate 100, aspartate 127, and aspartate 150. Aspartate 150 is a catalytic residue. Lysine 154 provides a ligand contact to substrate. The interaction with RNA stretch occupies residues 156-161 (RHNKRR). Residues aspartate 186 and 223–226 (THFE) contribute to the substrate site.

The protein belongs to the class I-like SAM-binding methyltransferase superfamily. TrmB family.

It catalyses the reaction guanosine(46) in tRNA + S-adenosyl-L-methionine = N(7)-methylguanosine(46) in tRNA + S-adenosyl-L-homocysteine. The protein operates within tRNA modification; N(7)-methylguanine-tRNA biosynthesis. Catalyzes the formation of N(7)-methylguanine at position 46 (m7G46) in tRNA. The sequence is that of tRNA (guanine-N(7)-)-methyltransferase from Xanthomonas oryzae pv. oryzae (strain MAFF 311018).